A 660-amino-acid chain; its full sequence is Pro-secreted protein ORF2 (660 aa).

Residues 1 to 19 (MRPRPILLLLLMFLPMLPA) form the signal peptide. 2 disordered regions span residues 18-43 (PAPP…GFWG) and 66-127 (VTAA…DVDS). Residues 28-33 (RRRGRR) carry the Nuclear localization signal motif. Residues 103–116 (TTAGAAPLTAVAPA) show a composition bias toward low complexity. Asn137 and Asn310 each carry an N-linked (GlcNAc...) asparagine; by host glycan. The particle formation stretch occupies residues 368–394 (IALTLFNLADTLLGGLPTELISSAGGQ). N-linked (GlcNAc...) asparagine; by host glycosylation is present at Asn562. Residues 585–610 (TTSLGAGPVSISAVAVLAPHSALALL) form an oligomerization region.

This sequence belongs to the hepevirus capsid protein family. In terms of assembly, homodimer. Self-assembles to form the capsid. The capsid is dominated by dimers that define the 30 morphological units. Interacts with phosphorylated protein ORF3. Interacts with host TMEM134. Interacts with host ASGR1 and ASGR2; these interactions facilitate infection of host hepatocytes. Post-translationally, cleaved by host protease in the N-terminus. N-glycosylated. In terms of processing, not N-glycosylated. The C-terminus of the capsid protein ORF2 is truncated in non-enveloped virions shedded in feces, probably due to host proteases.

The protein resides in the secreted. It is found in the virion. The protein localises to the host cytoplasm. It localises to the host endoplasmic reticulum. Its subcellular location is the host Golgi apparatus. The protein resides in the host cell surface. It is found in the host nucleus. Its function is as follows. Plays a role in the inhibition of host antibody-mediated neutralization without blocking viral cell entry. In terms of biological role, forms an icosahedral capsid with a T=1 symmetry and a 34 nm diameter. The capsid is composed of 60 copies linked to each other. Binds to the 5' end of the genomic RNA to mediate genome encapsidation. Binds to heparin surface proteoglycans (HSPGs) to mediate viral entry. Additionally, the interactions with host ASGR1 and ASGR2 facilitate viral infection of hepatocytes. Inhibits IFN production by blocking host TBK1-induced IRF3 phosphorylation. The nuclear form probably modulates host gene expression. This Hepatitis E virus genotype 1 (isolate Human/Burma) (HEV-1) protein is Pro-secreted protein ORF2.